Here is a 160-residue protein sequence, read N- to C-terminus: uncharacterized protein (160 aa).

This is an uncharacterized protein from Galliformes (FAdV-1).